Reading from the N-terminus, the 152-residue chain is Deoxyuridine 5'-triphosphate nucleotidohydrolase (152 aa).

Substrate is bound by residues 65-67, asparagine 78, and 82-84; these read RSG and TID.

Belongs to the dUTPase family. It depends on Mg(2+) as a cofactor.

It catalyses the reaction dUTP + H2O = dUMP + diphosphate + H(+). The protein operates within pyrimidine metabolism; dUMP biosynthesis; dUMP from dCTP (dUTP route): step 2/2. Its function is as follows. This enzyme is involved in nucleotide metabolism: it produces dUMP, the immediate precursor of thymidine nucleotides and it decreases the intracellular concentration of dUTP so that uracil cannot be incorporated into DNA. The polypeptide is Deoxyuridine 5'-triphosphate nucleotidohydrolase (Chlorobaculum tepidum (strain ATCC 49652 / DSM 12025 / NBRC 103806 / TLS) (Chlorobium tepidum)).